The chain runs to 286 residues: Aldo-keto reductase MAV_4483 (286 aa).

Y61 serves as the catalytic Proton donor. The NADPH site is built by L201, V203, V239, R241, S242, R247, and N251.

It belongs to the aldo/keto reductase family.

In Mycobacterium avium (strain 104), this protein is Aldo-keto reductase MAV_4483.